A 194-amino-acid chain; its full sequence is Serine/threonine-protein kinase mos (194 aa).

Residues 47 to 194 (LCLLHLLGSG…HLDLKPANIF (148 aa)) enclose the Protein kinase domain. ATP contacts are provided by residues 53 to 61 (LGSGGFGSV) and Lys74. Asp187 acts as the Proton acceptor in catalysis.

The protein belongs to the protein kinase superfamily. Ser/Thr protein kinase family.

The enzyme catalyses L-seryl-[protein] + ATP = O-phospho-L-seryl-[protein] + ADP + H(+). It carries out the reaction L-threonyl-[protein] + ATP = O-phospho-L-threonyl-[protein] + ADP + H(+). This Atheris squamigera (Variable bush viper) protein is Serine/threonine-protein kinase mos (MOS).